Reading from the N-terminus, the 421-residue chain is 3-phosphoshikimate 1-carboxyvinyltransferase (421 aa).

3-phosphoshikimate-binding residues include K19, S20, and R24. K19 provides a ligand contact to phosphoenolpyruvate. Positions 88 and 116 each coordinate phosphoenolpyruvate. 3-phosphoshikimate-binding residues include S160, Q162, D307, and K334. Q162 provides a ligand contact to phosphoenolpyruvate. D307 functions as the Proton acceptor in the catalytic mechanism. Residues R338 and R380 each coordinate phosphoenolpyruvate.

Belongs to the EPSP synthase family. Monomer.

The protein localises to the cytoplasm. The enzyme catalyses 3-phosphoshikimate + phosphoenolpyruvate = 5-O-(1-carboxyvinyl)-3-phosphoshikimate + phosphate. The protein operates within metabolic intermediate biosynthesis; chorismate biosynthesis; chorismate from D-erythrose 4-phosphate and phosphoenolpyruvate: step 6/7. Catalyzes the transfer of the enolpyruvyl moiety of phosphoenolpyruvate (PEP) to the 5-hydroxyl of shikimate-3-phosphate (S3P) to produce enolpyruvyl shikimate-3-phosphate and inorganic phosphate. The polypeptide is 3-phosphoshikimate 1-carboxyvinyltransferase (Thermotoga neapolitana (strain ATCC 49049 / DSM 4359 / NBRC 107923 / NS-E)).